The sequence spans 105 residues: Large ribosomal subunit protein uL24 (105 aa).

The protein belongs to the universal ribosomal protein uL24 family. Part of the 50S ribosomal subunit.

One of two assembly initiator proteins, it binds directly to the 5'-end of the 23S rRNA, where it nucleates assembly of the 50S subunit. Its function is as follows. One of the proteins that surrounds the polypeptide exit tunnel on the outside of the subunit. The protein is Large ribosomal subunit protein uL24 of Aromatoleum aromaticum (strain DSM 19018 / LMG 30748 / EbN1) (Azoarcus sp. (strain EbN1)).